The chain runs to 593 residues: Multidrug resistance-like ATP-binding protein MdlB (593 aa).

The Cytoplasmic segment spans residues 1 to 25 (MRSFSQLWPTLKRLLAYGSPWRKPL). The 286-residue stretch at 25–310 (LGIAVLMMWV…LTTQQAMLQQ (286 aa)) folds into the ABC transmembrane type-1 domain. A helical transmembrane segment spans residues 26–46 (GIAVLMMWVAAAAEVSGPLLI). Over 47–62 (SYFIDNMVAKNNLPLK) the chain is Periplasmic. The chain crosses the membrane as a helical span at residues 63–83 (VVAGLAAAYVGLQLFAAGLHY). The Cytoplasmic segment spans residues 84–140 (AQSLLFNRAAVGVVQQLRTDVMDAALRQPLSEFDTQPVGQVISRVTNDTEVIRDLYV). A helical membrane pass occupies residues 141 to 161 (TVVATVLRSAALVGAMLVAMF). Residues 162–164 (SLD) lie on the Periplasmic side of the membrane. The helical transmembrane segment at 165-185 (WRMALVAIMIFPVVLVVMVIY) threads the bilayer. Over 186-254 (QRYSTPIVRR…LRLDGFLLRP (69 aa)) the chain is Cytoplasmic. A helical membrane pass occupies residues 255–275 (LLSLFSSLILCGLLMLFGFSA). Residues 276–278 (SGT) lie on the Periplasmic side of the membrane. The chain crosses the membrane as a helical span at residues 279–299 (IEVGVLYAFISYLGRLNEPLI). Topologically, residues 300–593 (ELTTQQAMLQ…SVREEESLSA (294 aa)) are cytoplasmic. Residues 341–574 (IEVDNVSFAY…QGRYWQMYQL (234 aa)) enclose the ABC transporter domain. Residue 374–381 (GHTGSGKS) participates in ATP binding.

The protein belongs to the ABC transporter superfamily. Drug exporter-2 (TC 3.A.1.117) family.

It is found in the cell inner membrane. It carries out the reaction ATP + H2O + xenobioticSide 1 = ADP + phosphate + xenobioticSide 2.. In Escherichia coli O6:H1 (strain CFT073 / ATCC 700928 / UPEC), this protein is Multidrug resistance-like ATP-binding protein MdlB (mdlB).